The sequence spans 150 residues: Regulatory protein RecX (150 aa).

The protein belongs to the RecX family.

It is found in the cytoplasm. In terms of biological role, modulates RecA activity. This chain is Regulatory protein RecX, found in Acidithiobacillus ferrooxidans (strain ATCC 23270 / DSM 14882 / CIP 104768 / NCIMB 8455) (Ferrobacillus ferrooxidans (strain ATCC 23270)).